The primary structure comprises 198 residues: Small ribosomal subunit protein uS4c (198 aa).

A disordered region spans residues 17-40; the sequence is TLPGLTSKRPKNRKDSMNRSSSRK. In terms of domain architecture, S4 RNA-binding spans 88 to 154; sequence MRLDKSFSIG…IKKNIDLFQR (67 aa).

The protein belongs to the universal ribosomal protein uS4 family. In terms of assembly, part of the 30S ribosomal subunit. Contacts protein S5. The interaction surface between S4 and S5 is involved in control of translational fidelity.

The protein localises to the plastid. It localises to the chloroplast. Its function is as follows. One of the primary rRNA binding proteins, it binds directly to 16S rRNA where it nucleates assembly of the body of the 30S subunit. With S5 and S12 plays an important role in translational accuracy. This Pinus thunbergii (Japanese black pine) protein is Small ribosomal subunit protein uS4c (rps4).